The chain runs to 150 residues: MSTLEQKLTEMITAPVEALGFELVGIEFIRGRTSTLRIYIDSEDGINVDDCADVSHQVSAVLDVEDPITVAYNLEVSSPGLDRPLFTAEHYARFVGEEVTLVLRMAVQNRRKWQGVIKAVDGEMITVTVEGKDEVFALSNIQKANLVPHF.

Belongs to the RimP family.

The protein localises to the cytoplasm. Functionally, required for maturation of 30S ribosomal subunits. This chain is Ribosome maturation factor RimP, found in Escherichia coli O9:H4 (strain HS).